A 72-amino-acid chain; its full sequence is Translation initiation factor IF-1 1 (72 aa).

The region spanning 1–72 (MAKDDVIQMQ…SRARIVFRAK (72 aa)) is the S1-like domain.

Belongs to the IF-1 family. As to quaternary structure, component of the 30S ribosomal translation pre-initiation complex which assembles on the 30S ribosome in the order IF-2 and IF-3, IF-1 and N-formylmethionyl-tRNA(fMet); mRNA recruitment can occur at any time during PIC assembly.

It is found in the cytoplasm. Its function is as follows. One of the essential components for the initiation of protein synthesis. Stabilizes the binding of IF-2 and IF-3 on the 30S subunit to which N-formylmethionyl-tRNA(fMet) subsequently binds. Helps modulate mRNA selection, yielding the 30S pre-initiation complex (PIC). Upon addition of the 50S ribosomal subunit IF-1, IF-2 and IF-3 are released leaving the mature 70S translation initiation complex. This chain is Translation initiation factor IF-1 1, found in Ralstonia nicotianae (strain ATCC BAA-1114 / GMI1000) (Ralstonia solanacearum).